A 298-amino-acid polypeptide reads, in one-letter code: Nucleotide-binding protein RSKD131_3085 (298 aa).

11-18 (GPSGAGRT) is an ATP binding site. GTP is bound at residue 58 to 61 (DVRN).

Belongs to the RapZ-like family.

Displays ATPase and GTPase activities. This is Nucleotide-binding protein RSKD131_3085 from Cereibacter sphaeroides (strain KD131 / KCTC 12085) (Rhodobacter sphaeroides).